A 418-amino-acid polypeptide reads, in one-letter code: AP-3 complex subunit mu-1 (418 aa).

One can recognise an MHD domain in the interval 176 to 417; that stretch reads NNEAYFDVVE…ITKAGKFQVR (242 aa).

It belongs to the adaptor complexes medium subunit family. As to quaternary structure, adaptor protein complex 3 (AP-3) is a heterotetramer composed of two large adaptins (delta-type subunit AP3D1 and beta-type subunit AP3B1 or AP3B2), a medium adaptin (mu-type subunit AP3M1 or AP3M2) and a small adaptin (sigma-type subunit APS1 or AP3S2). Interacts with AGAP1. AP-3 associates with the BLOC-1 complex.

Its subcellular location is the golgi apparatus. It is found in the cytoplasmic vesicle membrane. In terms of biological role, part of the AP-3 complex, an adaptor-related complex which is not clathrin-associated. The complex is associated with the Golgi region as well as more peripheral structures. It facilitates the budding of vesicles from the Golgi membrane and may be directly involved in trafficking to lysosomes. In concert with the BLOC-1 complex, AP-3 is required to target cargos into vesicles assembled at cell bodies for delivery into neurites and nerve terminals. This chain is AP-3 complex subunit mu-1 (Ap3m1), found in Rattus norvegicus (Rat).